The sequence spans 281 residues: Aliphatic sulfonates import ATP-binding protein SsuB (281 aa).

An ABC transporter domain is found at 40–263; that stretch reads LTLRNLRKSF…RRGSADLAAL (224 aa). Position 72-79 (72-79) interacts with ATP; that stretch reads GRSGCGKS.

The protein belongs to the ABC transporter superfamily. Aliphatic sulfonates importer (TC 3.A.1.17.2) family. The complex is composed of two ATP-binding proteins (SsuB), two transmembrane proteins (SsuC) and a solute-binding protein (SsuA).

It is found in the cell inner membrane. The enzyme catalyses ATP + H2O + aliphatic sulfonate-[sulfonate-binding protein]Side 1 = ADP + phosphate + aliphatic sulfonateSide 2 + [sulfonate-binding protein]Side 1.. Functionally, part of the ABC transporter complex SsuABC involved in aliphatic sulfonates import. Responsible for energy coupling to the transport system. The chain is Aliphatic sulfonates import ATP-binding protein SsuB from Rhodopseudomonas palustris (strain BisA53).